The following is a 638-amino-acid chain: Broad-specificity ulvan lyase (638 aa).

An N-terminal signal peptide occupies residues 1–27; it reads MKRRNFIQLSSLATIGMSLPSAGIVNA.

The protein belongs to the polysaccharide lyase 37 family.

It localises to the periplasm. It carries out the reaction Endolytic cleavage of (1-&gt;4)-beta-galactosaminic bonds between N-acetylgalactosamine and either D-glucuronic acid or L-iduronic acid to produce a mixture of Delta(4)-unsaturated oligosaccharides of different sizes that are ultimately degraded to Delta(4)-unsaturated tetra- and disaccharides.. The catalysed reaction is Elimination of sulfate, appears to act on linkages between N-acetyl-D-glucosamine and uronate. Product is an unsaturated sugar.. In terms of biological role, broad-specificity lyase involved in ulvan degradation. Ulvan is the main polysaccharide component of the Ulvales (green seaweed) cell wall. It is composed of disaccharide building blocks comprising 3-sulfated rhamnose (Rha3S) linked to D-glucuronic acid (GlcA), L-iduronic acid (IduA), or D-xylose (Xyl). Ulvan lyase catalyzes the endolytic cleavage of the glycosidic bond between Rha3S and the uronic acids GlcA or IduA, producing oligosaccharides that have unsaturated 4-deoxy-L-threo-hex-4-enopyranosiduronic acid (deltaUA) at the non-reducing end. This results eventually in the degradation of the ulvan polysaccharide into deltaUA-Rha3S disaccharides and deltaUA-Rha3S-Xyl-Rha3S tetrasaccharides. It is also able to degrade the glycosaminoglycans heparan sulfate and chondroitin sulfate. Not active against pectin, xanthan or alginate. This chain is Broad-specificity ulvan lyase, found in Formosa agariphila (strain DSM 15362 / KCTC 12365 / LMG 23005 / KMM 3901 / M-2Alg 35-1).